The sequence spans 629 residues: 5-aminolevulinate synthase, mitochondrial (629 aa).

Residues 1 to 69 (MDSVLRQSKA…VQSARTGGRA (69 aa)) constitute a mitochondrion transit peptide. Positions 155, 268, and 287 each coordinate substrate. Pyridoxal 5'-phosphate-binding residues include S320, H348, and T388. Residue K391 is part of the active site. K391 is subject to N6-(pyridoxal phosphate)lysine. Pyridoxal 5'-phosphate-binding residues include T420 and T421. T506 is a binding site for substrate.

The protein belongs to the class-II pyridoxal-phosphate-dependent aminotransferase family. Homodimer. Pyridoxal 5'-phosphate is required as a cofactor.

Its subcellular location is the mitochondrion matrix. The enzyme catalyses succinyl-CoA + glycine + H(+) = 5-aminolevulinate + CO2 + CoA. It functions in the pathway porphyrin-containing compound metabolism; protoporphyrin-IX biosynthesis; 5-aminolevulinate from glycine: step 1/1. Functionally, catalyzes the synthesis of 5-aminolevulinate (ALA) from succinyl-CoA and glycine, the first and rate-limiting step in heme biosynthesis. In Neurospora crassa (strain ATCC 24698 / 74-OR23-1A / CBS 708.71 / DSM 1257 / FGSC 987), this protein is 5-aminolevulinate synthase, mitochondrial (alv-1).